Reading from the N-terminus, the 296-residue chain is Tyrosine recombinase XerC (296 aa).

A Core-binding (CB) domain is found at alanine 2–leucine 85. The 180-residue stretch at threonine 106–aspartate 285 folds into the Tyr recombinase domain. Residues arginine 145, lysine 169, histidine 237, arginine 240, and histidine 263 contribute to the active site. Tyrosine 272 (O-(3'-phospho-DNA)-tyrosine intermediate) is an active-site residue.

This sequence belongs to the 'phage' integrase family. XerC subfamily. Forms a cyclic heterotetrameric complex composed of two molecules of XerC and two molecules of XerD.

The protein localises to the cytoplasm. Its function is as follows. Site-specific tyrosine recombinase, which acts by catalyzing the cutting and rejoining of the recombining DNA molecules. The XerC-XerD complex is essential to convert dimers of the bacterial chromosome into monomers to permit their segregation at cell division. It also contributes to the segregational stability of plasmids. This is Tyrosine recombinase XerC from Shewanella amazonensis (strain ATCC BAA-1098 / SB2B).